A 48-amino-acid chain; its full sequence is Large ribosomal subunit protein bL32 (48 aa).

Basic residues predominate over residues 1 to 20 (MAVPKRRVSKTRAAKRRTHY). The tract at residues 1–48 (MAVPKRRVSKTRAAKRRTHYKVSLPIPVKDKDGSWKLPHRINTKTGEY) is disordered.

Belongs to the bacterial ribosomal protein bL32 family.

This Campylobacter hominis (strain ATCC BAA-381 / DSM 21671 / CCUG 45161 / LMG 19568 / NCTC 13146 / CH001A) protein is Large ribosomal subunit protein bL32.